The following is a 702-amino-acid chain: Ribosomal RNA large subunit methyltransferase K/L (702 aa).

The THUMP domain maps to leucine 43–leucine 154.

This sequence belongs to the methyltransferase superfamily. RlmKL family.

The protein localises to the cytoplasm. It carries out the reaction guanosine(2445) in 23S rRNA + S-adenosyl-L-methionine = N(2)-methylguanosine(2445) in 23S rRNA + S-adenosyl-L-homocysteine + H(+). The enzyme catalyses guanosine(2069) in 23S rRNA + S-adenosyl-L-methionine = N(2)-methylguanosine(2069) in 23S rRNA + S-adenosyl-L-homocysteine + H(+). Its function is as follows. Specifically methylates the guanine in position 2445 (m2G2445) and the guanine in position 2069 (m7G2069) of 23S rRNA. The polypeptide is Ribosomal RNA large subunit methyltransferase K/L (Salmonella arizonae (strain ATCC BAA-731 / CDC346-86 / RSK2980)).